We begin with the raw amino-acid sequence, 447 residues long: Adenylosuccinate synthetase (447 aa).

GTP is bound by residues 35-41 and 63-65; these read GDEGKGK and GHT. Aspartate 36 acts as the Proton acceptor in catalysis. 2 residues coordinate Mg(2+): aspartate 36 and glycine 63. IMP-binding positions include 36–39, 61–64, threonine 153, arginine 167, asparagine 245, threonine 260, and arginine 324; these read DEGK and NAGH. The active-site Proton donor is histidine 64. 320-326 is a substrate binding site; sequence VTTKRKR. Residues arginine 326, 352-354, and 435-437 contribute to the GTP site; these read KLD and GVG.

This sequence belongs to the adenylosuccinate synthetase family. As to quaternary structure, homodimer. Mg(2+) is required as a cofactor.

The protein localises to the cytoplasm. It carries out the reaction IMP + L-aspartate + GTP = N(6)-(1,2-dicarboxyethyl)-AMP + GDP + phosphate + 2 H(+). It participates in purine metabolism; AMP biosynthesis via de novo pathway; AMP from IMP: step 1/2. Its function is as follows. Plays an important role in the de novo pathway and in the salvage pathway of purine nucleotide biosynthesis. Catalyzes the first committed step in the biosynthesis of AMP from IMP. In Drosophila erecta (Fruit fly), this protein is Adenylosuccinate synthetase.